Reading from the N-terminus, the 161-residue chain is Large ribosomal subunit protein uL15 (161 aa).

Residues Met-1–Val-44 are disordered. A compositionally biased stretch (gly residues) spans Arg-21–Gly-37.

The protein belongs to the universal ribosomal protein uL15 family. In terms of assembly, part of the 50S ribosomal subunit.

Binds to the 23S rRNA. This is Large ribosomal subunit protein uL15 from Rhodopseudomonas palustris (strain BisA53).